A 288-amino-acid polypeptide reads, in one-letter code: NAD kinase (288 aa).

Catalysis depends on D68, which acts as the Proton acceptor. NAD(+) is bound by residues 68–69, 142–143, R153, D172, and Q242; these read DG and ND.

The protein belongs to the NAD kinase family. Requires a divalent metal cation as cofactor.

Its subcellular location is the cytoplasm. It catalyses the reaction NAD(+) + ATP = ADP + NADP(+) + H(+). Involved in the regulation of the intracellular balance of NAD and NADP, and is a key enzyme in the biosynthesis of NADP. Catalyzes specifically the phosphorylation on 2'-hydroxyl of the adenosine moiety of NAD to yield NADP. This is NAD kinase from Desulforamulus reducens (strain ATCC BAA-1160 / DSM 100696 / MI-1) (Desulfotomaculum reducens).